The chain runs to 219 residues: 3-dehydroquinate dehydratase (219 aa).

3-dehydroquinate is bound by residues 28–30 (ELR) and R61. The active-site Proton donor/acceptor is H116. The active-site Schiff-base intermediate with substrate is K142. The 3-dehydroquinate site is built by R180 and Q203.

This sequence belongs to the type-I 3-dehydroquinase family. Homodimer.

The enzyme catalyses 3-dehydroquinate = 3-dehydroshikimate + H2O. The protein operates within metabolic intermediate biosynthesis; chorismate biosynthesis; chorismate from D-erythrose 4-phosphate and phosphoenolpyruvate: step 3/7. Functionally, involved in the third step of the chorismate pathway, which leads to the biosynthesis of aromatic amino acids. Catalyzes the cis-dehydration of 3-dehydroquinate (DHQ) and introduces the first double bond of the aromatic ring to yield 3-dehydroshikimate. This chain is 3-dehydroquinate dehydratase, found in Aquifex aeolicus (strain VF5).